The chain runs to 269 residues: Sulfur carrier protein FdhD (269 aa).

The Cysteine persulfide intermediate role is filled by Cys111.

It belongs to the FdhD family.

Its subcellular location is the cytoplasm. Required for formate dehydrogenase (FDH) activity. Acts as a sulfur carrier protein that transfers sulfur from IscS to the molybdenum cofactor prior to its insertion into FDH. This Brucella abortus biovar 1 (strain 9-941) protein is Sulfur carrier protein FdhD.